We begin with the raw amino-acid sequence, 183 residues long: Somatotropin (183 aa).

A Zn(2+)-binding site is contributed by H19. The tract at residues 38–67 (EEQRHSHKSSPSAFCQSETIPAPTGKEDAQ) is disordered. A compositionally biased stretch (polar residues) spans 46–56 (SSPSAFCQSET). Cysteines 52 and 156 form a disulfide. E165 provides a ligand contact to Zn(2+). C173 and C181 are joined by a disulfide.

It belongs to the somatotropin/prolactin family.

It is found in the secreted. Growth hormone plays an important role in growth control and is involved in the regulation of several anabolic processes. Implicated as an osmoregulatory substance important for seawater adaptation. The protein is Somatotropin (gh) of Prionace glauca (Blue shark).